Reading from the N-terminus, the 234-residue chain is MGSSSSSSLNNSPIRADSMVTPESQMTVNDNKNDNVSILSPSVKKSFESPRKSTSIPANNNLTPVKSRWSFSSSKKSFGSKDETFFDSQPWLQSDSDDDFHSVNGDFTPSLGNTPKSSFSDRPPRFHNLIFHEKKPSRGSSSPAPLPRRKKLGELFRDSIREEREESGSSSAISTPYLSGANSREFNDTAIEKEEKKKSNWHHHRCLPGFSSCGGSFMERRKKMSSETPVVAVK.

Low complexity predominate over residues 1–12; that stretch reads MGSSSSSSLNNS. The segment at 1-184 is disordered; sequence MGSSSSSSLN…TPYLSGANSR (184 aa). Composition is skewed to polar residues over residues 21–40 and 52–64; these read TPESQMTVNDNKNDNVSILS and KSTSIPANNNLTP. Positions 66–77 are enriched in low complexity; that stretch reads KSRWSFSSSKKS. A compositionally biased stretch (polar residues) spans 105-120; the sequence is GDFTPSLGNTPKSSFS. Over residues 152 to 167 the composition is skewed to basic and acidic residues; the sequence is LGELFRDSIREEREES.

In terms of assembly, interacts with RLK902. As to expression, expressed in stems, rosette leaves and roots and weakly in inflorescences.

This is an uncharacterized protein from Arabidopsis thaliana (Mouse-ear cress).